A 1298-amino-acid chain; its full sequence is Phosphoribosylformylglycinamidine synthase (1298 aa).

The tract at residues 303–327 (FPGAATGSGGEIRDEGATGRGAKPK) is disordered. ATP-binding positions include 305-316 (GAATGSGGEIRD), 384-386 (TGY), and A676. D677, E716, N720, and D884 together coordinate Mg(2+). S886 is a binding site for ATP. One can recognise a Glutamine amidotransferase type-1 domain in the interval 1045-1298 (VAVLREQGVN…MFRNARAWVN (254 aa)). The active-site Nucleophile is C1138. Residues H1263 and E1265 contribute to the active site.

It in the N-terminal section; belongs to the FGAMS family. As to quaternary structure, monomer.

The protein resides in the cytoplasm. The enzyme catalyses N(2)-formyl-N(1)-(5-phospho-beta-D-ribosyl)glycinamide + L-glutamine + ATP + H2O = 2-formamido-N(1)-(5-O-phospho-beta-D-ribosyl)acetamidine + L-glutamate + ADP + phosphate + H(+). It participates in purine metabolism; IMP biosynthesis via de novo pathway; 5-amino-1-(5-phospho-D-ribosyl)imidazole from N(2)-formyl-N(1)-(5-phospho-D-ribosyl)glycinamide: step 1/2. In terms of biological role, phosphoribosylformylglycinamidine synthase involved in the purines biosynthetic pathway. Catalyzes the ATP-dependent conversion of formylglycinamide ribonucleotide (FGAR) and glutamine to yield formylglycinamidine ribonucleotide (FGAM) and glutamate. This chain is Phosphoribosylformylglycinamidine synthase, found in Pseudomonas syringae pv. tomato (strain ATCC BAA-871 / DC3000).